Reading from the N-terminus, the 299-residue chain is Ectoine dioxygenase (299 aa).

Residues 1-40 form a disordered region; sequence MTTTTTNVTDLYPTRGATEVATPRQDPVVWGSPDAPGPVS. L-ectoine is bound at residue Gln-133. A 2-oxoglutarate-binding site is contributed by Lys-139. 3 residues coordinate Fe cation: His-150, Asp-152, and His-251.

This sequence belongs to the PhyH family. EctD subfamily. As to quaternary structure, homodimer. Requires Fe(2+) as cofactor.

It catalyses the reaction L-ectoine + 2-oxoglutarate + O2 = 5-hydroxyectoine + succinate + CO2. Its function is as follows. Involved in the biosynthesis of 5-hydroxyectoine, called compatible solute, which helps organisms to survive extreme osmotic stress by acting as a highly soluble organic osmolyte. Catalyzes the 2-oxoglutarate-dependent selective hydroxylation of L-ectoine to yield (4S,5S)-5-hydroxyectoine. The polypeptide is Ectoine dioxygenase (Streptomyces coelicolor (strain ATCC BAA-471 / A3(2) / M145)).